Reading from the N-terminus, the 496-residue chain is Pseudooxynicotine dehydrogenase (496 aa).

Residues 1-42 constitute a signal peptide (tat-type signal); it reads MTKDGDEGSKSGVSRRKFLGSAAVGVATAGIASQLLTLSAPA. Positions 69, 88, 96, 113, 285, 461, and 471 each coordinate FAD.

This sequence belongs to the flavin monoamine oxidase family. In terms of assembly, homodimer. Requires FAD as cofactor. Predicted to be exported by the Tat system. The position of the signal peptide cleavage has not been experimentally proven.

The protein resides in the periplasm. The catalysed reaction is pseudooxynicotine + 2 Fe(III)-[cytochrome c] + H2O = 4-oxo-4-(pyridin-3-yl)butanal + methylamine + 2 Fe(II)-[cytochrome c] + 2 H(+). The protein operates within alkaloid degradation; nicotine degradation. Its activity is regulated as follows. Strongly inhibited by Na(2)MoO(4) and FeCl(3). Activity is nearly twice as high in the presence of Na(2)WO(4). Involved in nicotine degradation. Catalyzes the deamination of pseudooxynicotine to 3-succinoylsemialdehyde-pyridine. Functions as a dehydrogenase that uses the c-type cytochrome protein CycN as the physiological electron acceptor. O(2) is a poor electron acceptor. Pnao is oxidized by CycN 230 times faster than O(2) at equivalent oxidant concentrations. This is Pseudooxynicotine dehydrogenase from Pseudomonas putida (strain DSM 28022 / S16).